The primary structure comprises 458 residues: ATP synthase subunit beta (458 aa).

Gly-148–Thr-155 is an ATP binding site.

This sequence belongs to the ATPase alpha/beta chains family. F-type ATPases have 2 components, CF(1) - the catalytic core - and CF(0) - the membrane proton channel. CF(1) has five subunits: alpha(3), beta(3), gamma(1), delta(1), epsilon(1). CF(0) has three main subunits: a(1), b(2) and c(9-12). The alpha and beta chains form an alternating ring which encloses part of the gamma chain. CF(1) is attached to CF(0) by a central stalk formed by the gamma and epsilon chains, while a peripheral stalk is formed by the delta and b chains.

Its subcellular location is the cell inner membrane. The enzyme catalyses ATP + H2O + 4 H(+)(in) = ADP + phosphate + 5 H(+)(out). Its function is as follows. Produces ATP from ADP in the presence of a proton gradient across the membrane. The catalytic sites are hosted primarily by the beta subunits. This Pseudomonas putida (strain W619) protein is ATP synthase subunit beta.